A 1103-amino-acid chain; its full sequence is Retinal guanylyl cyclase 2 (1103 aa).

Positions 1-46 (MFLAPWPFSHLMLWFVTLGRQRGQHGLASFKLLWCLWLLVLMSLPL) are cleaved as a signal peptide. Topologically, residues 47 to 465 (QVWAPPYKIG…DGRICQGGIN (419 aa)) are extracellular. An intrachain disulfide couples Cys-104 to Cys-132. Residues 466-490 (PTFALMVCLALLIALLSINGFAYFI) traverse the membrane as a helical segment. The Cytoplasmic segment spans residues 491–1103 (RHRINKIQLI…FQRRKQKSSW (613 aa)). The Protein kinase domain occupies 532–812 (FQITSEVQSG…DEIFNQFKTF (281 aa)). The Guanylate cyclase domain maps to 884–1014 (TLYFSDIVGF…DTVNTASRME (131 aa)).

It belongs to the adenylyl cyclase class-4/guanylyl cyclase family. As to quaternary structure, homodimer. Interacts with RD3; promotes the exit of GUCY2F from the endoplasmic reticulum and its trafficking to the photoreceptor outer segments. There are 9 conserved cysteine residues in sensory guanylate cyclases, 6 in the extracellular domain, which may be involved in intra- or interchain disulfide bonds. Expressed specifically in retina.

It is found in the membrane. It localises to the photoreceptor outer segment membrane. It carries out the reaction GTP = 3',5'-cyclic GMP + diphosphate. Activated by GUCA1B when free calcium ions concentration is low, and inhibited by GUCA1B when free calcium ions concentration is high. Inhibited by RD3. In terms of biological role, responsible for the synthesis of cyclic GMP (cGMP) in rods and cones of photoreceptors. Plays an essential role in phototransduction, by mediating cGMP replenishment. May also participate in the trafficking of membrane-asociated proteins to the photoreceptor outer segment membrane. This chain is Retinal guanylyl cyclase 2 (GUCY2F), found in Bos taurus (Bovine).